The following is a 261-amino-acid chain: Ribosomal RNA small subunit methyltransferase A (261 aa).

S-adenosyl-L-methionine contacts are provided by Asn-20, Leu-22, Gly-47, Glu-68, Asp-90, and Asn-110.

The protein belongs to the class I-like SAM-binding methyltransferase superfamily. rRNA adenine N(6)-methyltransferase family. RsmA subfamily.

It is found in the cytoplasm. It catalyses the reaction adenosine(1518)/adenosine(1519) in 16S rRNA + 4 S-adenosyl-L-methionine = N(6)-dimethyladenosine(1518)/N(6)-dimethyladenosine(1519) in 16S rRNA + 4 S-adenosyl-L-homocysteine + 4 H(+). Functionally, specifically dimethylates two adjacent adenosines (A1518 and A1519) in the loop of a conserved hairpin near the 3'-end of 16S rRNA in the 30S particle. May play a critical role in biogenesis of 30S subunits. In Prosthecochloris aestuarii (strain DSM 271 / SK 413), this protein is Ribosomal RNA small subunit methyltransferase A.